We begin with the raw amino-acid sequence, 209 residues long: MEQQKIPQATAKRLPLYYRFIQNLSLSGKQRVSSAELSEAVKVDSATIRRDFSYFGALGKKGYGYNVNYLLSFFRETLDQDDITRVALIGVGNLGTAFLHYNFTKNNNTKIEMAFDVSEEKVGTEIGGIPVYHLDELEERLSSDIQVAILTVPATVAQSVADRLAETNVHGILNFTPARLNVSDNIRIHHIDLAVELQTLVYFLKNYPQ.

A DNA-binding region (H-T-H motif) is located at residues leucine 16–phenylalanine 55. Residue glycine 90–glycine 95 participates in NAD(+) binding.

The protein belongs to the transcriptional regulatory Rex family. As to quaternary structure, homodimer.

The protein resides in the cytoplasm. Its function is as follows. Modulates transcription in response to changes in cellular NADH/NAD(+) redox state. This Bacillus anthracis (strain A0248) protein is Redox-sensing transcriptional repressor Rex.